The sequence spans 297 residues: Calponin-1 (297 aa).

The 104-residue stretch at 28 to 131 (HQREQELREW…STLLALASMA (104 aa)) folds into the Calponin-homology (CH) domain. Calponin-like repeat units follow at residues 164 to 189 (IGLQMGTNKFASQQGMTAYGTRRHLY), 204 to 229 (ISLQMGTNKGASQAGMTAPGTKRQIF), and 243 to 268 (VSLQMGSNKGASQRGMTVYGLPRQVY). Thr170 is modified (phosphothreonine; by ROCK2). Ser175 is subject to Phosphoserine; by ROCK2. Phosphothreonine; by ROCK2 is present on residues Thr180 and Thr184. The residue at position 259 (Thr259) is a Phosphothreonine; by ROCK2.

Belongs to the calponin family. In terms of assembly, part of cGMP kinase signaling complex at least composed of ACTA2/alpha-actin, CNN1/calponin H1, PLN/phospholamban, PRKG1 and ITPR1.

Thin filament-associated protein that is implicated in the regulation and modulation of smooth muscle contraction. It is capable of binding to actin, calmodulin and tropomyosin. The interaction of calponin with actin inhibits the actomyosin Mg-ATPase activity. This Ovis aries (Sheep) protein is Calponin-1 (CNN1).